The primary structure comprises 312 residues: Heme oxygenase 2 (312 aa).

Ser-2 carries the N-acetylserine modification. A Phosphoserine modification is found at Ser-2. His-41 lines the heme b pocket. HRM repeat units lie at residues 260-265 (KCPYYA) and 277-282 (SCPFRA). S-nitrosocysteine occurs at positions 261 and 278.

This sequence belongs to the heme oxygenase family. Post-translationally, S-nitrosylated by BLVRB.

Its subcellular location is the microsome. It localises to the endoplasmic reticulum. The enzyme catalyses heme b + 3 reduced [NADPH--hemoprotein reductase] + 3 O2 = biliverdin IXalpha + CO + Fe(2+) + 3 oxidized [NADPH--hemoprotein reductase] + 3 H2O + H(+). Heme oxygenase cleaves the heme ring at the alpha methene bridge to form biliverdin. Biliverdin is subsequently converted to bilirubin by biliverdin reductase. Under physiological conditions, the activity of heme oxygenase is highest in the spleen, where senescent erythrocytes are sequestrated and destroyed. Heme oxygenase 2 could be implicated in the production of carbon monoxide in brain where it could act as a neurotransmitter. The chain is Heme oxygenase 2 (HMOX2) from Oryctolagus cuniculus (Rabbit).